Consider the following 173-residue polypeptide: ATP synthase subunit d, mitochondrial (173 aa).

Residues 1-23 (MAARSAALKIDWVKVTSSLGLRG) constitute a mitochondrion transit peptide.

Belongs to the ATPase d subunit family. As to quaternary structure, F-type ATPases have 2 components, CF(1) - the catalytic core - and CF(0) - the membrane proton channel. In yeast, the dimeric form of ATP synthase consists of 17 polypeptides: alpha, beta, gamma, delta, epsilon, 4 (B), 5 (OSCP), 6 (A), 8, 9 (C), d, E (Tim11), f, g, h, i/j and k.

It is found in the mitochondrion inner membrane. Its function is as follows. Mitochondrial membrane ATP synthase (F(1)F(0) ATP synthase or Complex V) produces ATP from ADP in the presence of a proton gradient across the membrane which is generated by electron transport complexes of the respiratory chain. F-type ATPases consist of two structural domains, F(1) - containing the extramembraneous catalytic core, and F(0) - containing the membrane proton channel, linked together by a central stalk and a peripheral stalk. During catalysis, ATP synthesis in the catalytic domain of F(1) is coupled via a rotary mechanism of the central stalk subunits to proton translocation. Part of the complex F(0) domain and the peripheric stalk, which acts as a stator to hold the catalytic alpha(3)beta(3) subcomplex and subunit a/ATP6 static relative to the rotary elements. The sequence is that of ATP synthase subunit d, mitochondrial (atp7) from Aspergillus terreus (strain NIH 2624 / FGSC A1156).